Here is a 200-residue protein sequence, read N- to C-terminus: Peptidyl-tRNA hydrolase (200 aa).

Tyr-14 provides a ligand contact to tRNA. His-19 acts as the Proton acceptor in catalysis. Residues Phe-64, Asn-66, and Asn-112 each coordinate tRNA.

The protein belongs to the PTH family. As to quaternary structure, monomer.

The protein localises to the cytoplasm. The enzyme catalyses an N-acyl-L-alpha-aminoacyl-tRNA + H2O = an N-acyl-L-amino acid + a tRNA + H(+). In terms of biological role, hydrolyzes ribosome-free peptidyl-tRNAs (with 1 or more amino acids incorporated), which drop off the ribosome during protein synthesis, or as a result of ribosome stalling. Functionally, catalyzes the release of premature peptidyl moieties from peptidyl-tRNA molecules trapped in stalled 50S ribosomal subunits, and thus maintains levels of free tRNAs and 50S ribosomes. The protein is Peptidyl-tRNA hydrolase of Maricaulis maris (strain MCS10) (Caulobacter maris).